The chain runs to 392 residues: ATP phosphoribosyltransferase regulatory subunit (392 aa).

Belongs to the class-II aminoacyl-tRNA synthetase family. HisZ subfamily. In terms of assembly, heteromultimer composed of HisG and HisZ subunits.

The protein localises to the cytoplasm. Its pathway is amino-acid biosynthesis; L-histidine biosynthesis; L-histidine from 5-phospho-alpha-D-ribose 1-diphosphate: step 1/9. Required for the first step of histidine biosynthesis. May allow the feedback regulation of ATP phosphoribosyltransferase activity by histidine. The chain is ATP phosphoribosyltransferase regulatory subunit from Prochlorococcus marinus (strain MIT 9211).